The primary structure comprises 390 residues: Guanine nucleotide exchange factor for Rab-3A (390 aa).

Residues methionine 1–aspartate 60 are disordered. Low complexity predominate over residues proline 40–glutamine 58. Positions glutamate 73–valine 161 form a coiled coil. The segment at proline 166–serine 194 is disordered. Serine 168 and serine 179 each carry phosphoserine. Residues glycine 184–serine 194 show a composition bias toward basic residues.

This sequence belongs to the SEC2 family. As to quaternary structure, interacts with RAB3A and IHPK1 through the coiled-coil domain. This interaction is competitive. IHPK1 kinase activity is not required for this interaction.

Functionally, guanine nucleotide exchange factor (GEF) which may activate RAB3A, a GTPase that regulates synaptic vesicle exocytosis. Promotes the exchange of GDP to GTP, converting inactive GDP-bound Rab proteins into their active GTP-bound form. May also activate RAB8A and RAB8B. The polypeptide is Guanine nucleotide exchange factor for Rab-3A (RAB3IL1) (Bos taurus (Bovine)).